A 287-amino-acid chain; its full sequence is Pantothenate synthetase (287 aa).

30–37 lines the ATP pocket; that stretch reads MGNLHSGH. Histidine 37 (proton donor) is an active-site residue. Glutamine 61 is a (R)-pantoate binding site. Beta-alanine is bound at residue glutamine 61. Residue 149–152 participates in ATP binding; that stretch reads GEKD. A (R)-pantoate-binding site is contributed by glutamine 155. ATP is bound by residues valine 178 and 186 to 189; that span reads LSSR.

The protein belongs to the pantothenate synthetase family. In terms of assembly, homodimer.

It is found in the cytoplasm. It carries out the reaction (R)-pantoate + beta-alanine + ATP = (R)-pantothenate + AMP + diphosphate + H(+). It participates in cofactor biosynthesis; (R)-pantothenate biosynthesis; (R)-pantothenate from (R)-pantoate and beta-alanine: step 1/1. Functionally, catalyzes the condensation of pantoate with beta-alanine in an ATP-dependent reaction via a pantoyl-adenylate intermediate. The protein is Pantothenate synthetase of Pseudomonas putida (strain GB-1).